Reading from the N-terminus, the 375-residue chain is Glutamate 5-kinase (375 aa).

ATP is bound at residue Lys17. Substrate is bound by residues Ser58, Asp145, and Asn157. ATP contacts are provided by residues 177-178 and 219-225; these read SD and TGGMVTK. Residues 281-359 enclose the PUA domain; the sequence is QGALTLDDGA…RELARELGPA (79 aa).

It belongs to the glutamate 5-kinase family.

The protein localises to the cytoplasm. It carries out the reaction L-glutamate + ATP = L-glutamyl 5-phosphate + ADP. The protein operates within amino-acid biosynthesis; L-proline biosynthesis; L-glutamate 5-semialdehyde from L-glutamate: step 1/2. In terms of biological role, catalyzes the transfer of a phosphate group to glutamate to form L-glutamate 5-phosphate. This chain is Glutamate 5-kinase, found in Streptomyces avermitilis (strain ATCC 31267 / DSM 46492 / JCM 5070 / NBRC 14893 / NCIMB 12804 / NRRL 8165 / MA-4680).